The following is a 186-amino-acid chain: GTP-dependent dephospho-CoA kinase (186 aa).

Residues Asp43, Ile44, Val45, Asp62, Glu120, and Asp143 each coordinate GTP.

It belongs to the GTP-dependent DPCK family.

The catalysed reaction is 3'-dephospho-CoA + GTP = GDP + CoA + H(+). Its pathway is cofactor biosynthesis; coenzyme A biosynthesis. Its function is as follows. Catalyzes the GTP-dependent phosphorylation of the 3'-hydroxyl group of dephosphocoenzyme A to form coenzyme A (CoA). This chain is GTP-dependent dephospho-CoA kinase, found in Haloquadratum walsbyi (strain DSM 16790 / HBSQ001).